The sequence spans 257 residues: Acetylglutamate kinase (257 aa).

Substrate contacts are provided by residues 41 to 42, Arg-63, and Asn-158; that span reads GG.

It belongs to the acetylglutamate kinase family. ArgB subfamily.

The protein resides in the cytoplasm. It carries out the reaction N-acetyl-L-glutamate + ATP = N-acetyl-L-glutamyl 5-phosphate + ADP. It participates in amino-acid biosynthesis; L-arginine biosynthesis; N(2)-acetyl-L-ornithine from L-glutamate: step 2/4. In terms of biological role, catalyzes the ATP-dependent phosphorylation of N-acetyl-L-glutamate. The sequence is that of Acetylglutamate kinase from Bacteroides thetaiotaomicron (strain ATCC 29148 / DSM 2079 / JCM 5827 / CCUG 10774 / NCTC 10582 / VPI-5482 / E50).